The sequence spans 331 residues: 4-hydroxythreonine-4-phosphate dehydrogenase (331 aa).

Residues H136 and T137 each contribute to the substrate site. A divalent metal cation is bound by residues H166, H211, and H266. Substrate is bound by residues K274, N283, and R292.

This sequence belongs to the PdxA family. As to quaternary structure, homodimer. Zn(2+) is required as a cofactor. Requires Mg(2+) as cofactor. Co(2+) serves as cofactor.

The protein resides in the cytoplasm. It carries out the reaction 4-(phosphooxy)-L-threonine + NAD(+) = 3-amino-2-oxopropyl phosphate + CO2 + NADH. The protein operates within cofactor biosynthesis; pyridoxine 5'-phosphate biosynthesis; pyridoxine 5'-phosphate from D-erythrose 4-phosphate: step 4/5. Its function is as follows. Catalyzes the NAD(P)-dependent oxidation of 4-(phosphooxy)-L-threonine (HTP) into 2-amino-3-oxo-4-(phosphooxy)butyric acid which spontaneously decarboxylates to form 3-amino-2-oxopropyl phosphate (AHAP). This is 4-hydroxythreonine-4-phosphate dehydrogenase from Thioalkalivibrio sulfidiphilus (strain HL-EbGR7).